An 822-amino-acid polypeptide reads, in one-letter code: Fibroblast growth factor receptor 1 (822 aa).

A signal peptide spans 1–21 (MWSWKCLLFWAVLVTATLCTA). The Extracellular portion of the chain corresponds to 22–376 (RPSPTLPEQA…AVMTSPLYLE (355 aa)). In terms of domain architecture, Ig-like C2-type 1 spans 25–119 (PTLPEQAQPW…DTTYFSVNVS (95 aa)). The cysteines at positions 55 and 101 are disulfide-linked. N-linked (GlcNAc...) asparagine glycans are attached at residues Asn-77 and Asn-117. Residues 120 to 154 (DALPSSEDDDDDDDSSSEEKETDNTKPNRMPVAPY) are disordered. Residues 125–135 (SEDDDDDDDSS) are compositionally biased toward acidic residues. Residues 136-145 (SEEKETDNTK) show a composition bias toward basic and acidic residues. Ig-like C2-type domains are found at residues 158–246 (PEKM…YQLD) and 255–357 (PILQ…AWLT). Positions 160–177 (KMEKKLHAVPAAKTVKFK) are heparin-binding. Cysteines 178 and 230 form a disulfide. 6 N-linked (GlcNAc...) asparagine glycosylation sites follow: Asn-227, Asn-240, Asn-264, Asn-296, Asn-317, and Asn-330. A disulfide bridge links Cys-277 with Cys-341. The helical transmembrane segment at 377 to 397 (IIIYCTGAFLISCMVGSVIVY) threads the bilayer. Residues 398–822 (KMKSGTKKSD…QLANGGLKRR (425 aa)) lie on the Cytoplasmic side of the membrane. Phosphotyrosine; by autocatalysis is present on Tyr-463. The Protein kinase domain occupies 478–767 (LVLGKPLGEG…VALTSNQEYL (290 aa)). ATP-binding positions include 484–490 (LGEGCFG), Lys-514, 562–564 (EYA), and Asn-568. A phosphotyrosine; by autocatalysis mark is found at Tyr-583 and Tyr-585. Asp-623 (proton acceptor) is an active-site residue. Residues Arg-627 and Asp-641 each contribute to the ATP site. Phosphotyrosine; by autocatalysis occurs at positions 653, 654, 730, and 766. Over residues 778 to 792 (PSFPDTRSSTCSSGE) the composition is skewed to polar residues. Residues 778 to 822 (PSFPDTRSSTCSSGEDSVFSHEPLPEEPCLPRHPAQLANGGLKRR) form a disordered region.

This sequence belongs to the protein kinase superfamily. Tyr protein kinase family. Fibroblast growth factor receptor subfamily. As to quaternary structure, monomer. Homodimer after ligand binding. Interacts predominantly with FGF1 and FGF2, but can also interact with FGF3, FGF4, FGF5, FGF6, FGF8, FGF10, FGF19, FGF21, FGF22 and FGF23 (in vitro). Ligand specificity is determined by tissue-specific expression of isoforms, and differences in the third Ig-like domain are crucial for ligand specificity. Affinity for fibroblast growth factors (FGFs) is increased by heparan sulfate glycosaminoglycans that function as coreceptors. Likewise, KLB increases the affinity for FGF19, FGF21 and FGF23. Interacts (phosphorylated on Tyr-766) with PLCG1 (via SH2 domains). Interacts with FRS2. Interacts with RPS6KA1. Interacts (via C-terminus) with NEDD4 (via WW3 domain). Interacts with KL. Interacts with SHB (via SH2 domain). Interacts with GRB10. Interacts with ANOS1; this interaction does not interfere with FGF2-binding to FGFR1, but prevents binding of heparin-bound FGF2. Interacts with SOX2 and SOX3. Interacts with FLRT1, FLRT2 and FLRT3. Found in a ternary complex with FGF1 and ITGAV:ITGB3. Post-translationally, autophosphorylated. Binding of FGF family members together with heparan sulfate proteoglycan or heparin promotes receptor dimerization and autophosphorylation on tyrosine residues. Autophosphorylation occurs in trans between the two FGFR molecules present in the dimer and proceeds in a highly ordered manner. Initial autophosphorylation at Tyr-653 increases the kinase activity by a factor of 50 to 100. After this, Tyr-583 becomes phosphorylated, followed by phosphorylation of Tyr-463, Tyr-766, Tyr-583 and Tyr-585. In a third stage, Tyr-654 is autophosphorylated, resulting in a further tenfold increase of kinase activity. Phosphotyrosine residues provide docking sites for interacting proteins and so are crucial for FGFR1 function and its regulation. Ubiquitinated. FGFR1 is rapidly ubiquitinated by NEDD4 after autophosphorylation, leading to internalization and lysosomal degradation. CBL is recruited to activated FGFR1 via FRS2 and GRB2, and mediates ubiquitination and subsequent degradation of FGFR1. In terms of processing, N-glycosylated in the endoplasmic reticulum. The N-glycan chains undergo further maturation to an Endo H-resistant form in the Golgi apparatus. As to expression, detected in astrocytoma, neuroblastoma and adrenal cortex cell lines. Some isoforms are detected in foreskin fibroblast cell lines, however isoform 17, isoform 18 and isoform 19 are not detected in these cells.

It localises to the cell membrane. The protein localises to the nucleus. The protein resides in the cytoplasm. It is found in the cytosol. Its subcellular location is the cytoplasmic vesicle. It catalyses the reaction L-tyrosyl-[protein] + ATP = O-phospho-L-tyrosyl-[protein] + ADP + H(+). Present in an inactive conformation in the absence of bound ligand. Ligand binding leads to dimerization and activation by sequential autophosphorylation on tyrosine residues. Inhibited by ARQ 069; this compound maintains the kinase in an inactive conformation and inhibits autophosphorylation. Inhibited by PD173074. Tyrosine-protein kinase that acts as a cell-surface receptor for fibroblast growth factors and plays an essential role in the regulation of embryonic development, cell proliferation, differentiation and migration. Required for normal mesoderm patterning and correct axial organization during embryonic development, normal skeletogenesis and normal development of the gonadotropin-releasing hormone (GnRH) neuronal system. Phosphorylates PLCG1, FRS2, GAB1 and SHB. Ligand binding leads to the activation of several signaling cascades. Activation of PLCG1 leads to the production of the cellular signaling molecules diacylglycerol and inositol 1,4,5-trisphosphate. Phosphorylation of FRS2 triggers recruitment of GRB2, GAB1, PIK3R1 and SOS1, and mediates activation of RAS, MAPK1/ERK2, MAPK3/ERK1 and the MAP kinase signaling pathway, as well as of the AKT1 signaling pathway. Promotes phosphorylation of SHC1, STAT1 and PTPN11/SHP2. In the nucleus, enhances RPS6KA1 and CREB1 activity and contributes to the regulation of transcription. FGFR1 signaling is down-regulated by IL17RD/SEF, and by FGFR1 ubiquitination, internalization and degradation. This is Fibroblast growth factor receptor 1 (FGFR1) from Homo sapiens (Human).